Here is a 271-residue protein sequence, read N- to C-terminus: MEHGSIITQARREDALVLTKQGLVSKSSPKKPRGRNIFKALFCCFRAQHVGQSSSSTELAAYKEEANTIAKSDLLQCLQYQFYQIPGTCLLPEVTEEDQGRICVVIDLDETLVHSSFKPINNADFIVPIEIEGTTHQVYVLKRPYVDEFLRRMGELFECVLFTASLAKYADPVTDLLDRCGVFRARLFRESCVFHQGCYVKDLSRLGRDLRKTLILDNSPASYIFHPENAVPVQSWFDDMADTELLNLIPIFEELSGAEDVYTSLGQLRAP.

Residue Ser5 is modified to Phosphoserine. Residues 97-255 (EDQGRICVVI…LNLIPIFEEL (159 aa)) form the FCP1 homology domain. Residue Asp107 is the 4-aspartylphosphate intermediate of the active site. Residues Asp107, Asp109, and Asn218 each contribute to the Mg(2+) site. The active-site Proton donor is Asp109.

As to quaternary structure, monomer. Interacts with REST. It depends on Mg(2+) as a cofactor. In terms of tissue distribution, expression is restricted to non-neuronal tissues. Highest expression in pancreas and lowest in liver.

The protein localises to the nucleus. The catalysed reaction is O-phospho-L-seryl-[protein] + H2O = L-seryl-[protein] + phosphate. It carries out the reaction O-phospho-L-threonyl-[protein] + H2O = L-threonyl-[protein] + phosphate. Functionally, preferentially catalyzes the dephosphorylation of 'Ser-5' within the tandem 7 residue repeats in the C-terminal domain (CTD) of the largest RNA polymerase II subunit POLR2A. Negatively regulates RNA polymerase II transcription, possibly by controlling the transition from initiation/capping to processive transcript elongation. Recruited by REST to neuronal genes that contain RE-1 elements, leading to neuronal gene silencing in non-neuronal cells. May contribute to the development of sarcomas. This Homo sapiens (Human) protein is Carboxy-terminal domain RNA polymerase II polypeptide A small phosphatase 2 (CTDSP2).